The following is a 1092-amino-acid chain: Isoleucine--tRNA ligase (1092 aa).

The short motif at 53 to 63 is the 'HIGH' region element; it reads PFANGLPHYGH. The 'KMSKS' region motif lies at 613-617; that stretch reads KLSKR. An ATP-binding site is contributed by Lys-616.

It belongs to the class-I aminoacyl-tRNA synthetase family. IleS type 2 subfamily. As to quaternary structure, monomer. Zn(2+) is required as a cofactor.

It localises to the cytoplasm. The enzyme catalyses tRNA(Ile) + L-isoleucine + ATP = L-isoleucyl-tRNA(Ile) + AMP + diphosphate. In terms of biological role, catalyzes the attachment of isoleucine to tRNA(Ile). As IleRS can inadvertently accommodate and process structurally similar amino acids such as valine, to avoid such errors it has two additional distinct tRNA(Ile)-dependent editing activities. One activity is designated as 'pretransfer' editing and involves the hydrolysis of activated Val-AMP. The other activity is designated 'posttransfer' editing and involves deacylation of mischarged Val-tRNA(Ile). The protein is Isoleucine--tRNA ligase of Rickettsia peacockii (strain Rustic).